An 817-amino-acid chain; its full sequence is Leucine--tRNA ligase (817 aa).

Residues 42–52 carry the 'HIGH' region motif; that stretch reads PYPSGRLHMGH. Positions 576-580 match the 'KMSKS' region motif; that stretch reads KMSKS. Residue K579 coordinates ATP.

It belongs to the class-I aminoacyl-tRNA synthetase family.

The protein localises to the cytoplasm. The catalysed reaction is tRNA(Leu) + L-leucine + ATP = L-leucyl-tRNA(Leu) + AMP + diphosphate. This is Leucine--tRNA ligase from Halorhodospira halophila (strain DSM 244 / SL1) (Ectothiorhodospira halophila (strain DSM 244 / SL1)).